A 424-amino-acid polypeptide reads, in one-letter code: Histidine--tRNA ligase (424 aa).

Belongs to the class-II aminoacyl-tRNA synthetase family. In terms of assembly, homodimer.

The protein localises to the cytoplasm. It carries out the reaction tRNA(His) + L-histidine + ATP = L-histidyl-tRNA(His) + AMP + diphosphate + H(+). In Escherichia coli O17:K52:H18 (strain UMN026 / ExPEC), this protein is Histidine--tRNA ligase.